The chain runs to 431 residues: Adenylosuccinate synthetase (431 aa).

Residues 13 to 19 and 41 to 43 each bind GTP; these read GDEGKGK and GHT. D14 (proton acceptor) is an active-site residue. Positions 14 and 41 each coordinate Mg(2+). IMP is bound by residues 14 to 17, 39 to 42, T130, R144, Q225, T240, and R304; these read DEGK and NAGH. H42 (proton donor) is an active-site residue. Substrate is bound at residue 300-306; it reads AVTGRPR. GTP is bound by residues R306, 332 to 334, and 415 to 417; these read KLD and STG.

It belongs to the adenylosuccinate synthetase family. In terms of assembly, homodimer. It depends on Mg(2+) as a cofactor.

Its subcellular location is the cytoplasm. The enzyme catalyses IMP + L-aspartate + GTP = N(6)-(1,2-dicarboxyethyl)-AMP + GDP + phosphate + 2 H(+). The protein operates within purine metabolism; AMP biosynthesis via de novo pathway; AMP from IMP: step 1/2. Plays an important role in the de novo pathway of purine nucleotide biosynthesis. Catalyzes the first committed step in the biosynthesis of AMP from IMP. The chain is Adenylosuccinate synthetase from Legionella pneumophila (strain Paris).